Here is a 257-residue protein sequence, read N- to C-terminus: MFNKMRKTKEKDVPVTKEEVLRHPMPNHVAIIMDGNGRWAKKRALPRAAGHYEGMQVVRKITRFANELGIQILSLYAFSTENWKRPKSEVDYLMKLPEQFLTTFLPELVAENVKVQVIGHTEALPDHTRRAVEKAVKETSGNTGLVLNFALNYGSRAEIAAAVKQIAKDVERGMLAPEDITEPLISSYLMTSGLADPDLLIRTSGEIRLSNFMLWQLAYTELWFTDVLWPDFTEQHFLEAIAAYQRRDRRFGGVSAR.

Residue Asp-34 is part of the active site. A Mg(2+)-binding site is contributed by Asp-34. Residues 35–38, Trp-39, Arg-47, His-51, and 79–81 contribute to the substrate site; these read GNGR and STE. The active-site Proton acceptor is Asn-82. Substrate contacts are provided by residues Trp-83, Arg-85, Arg-202, and 208–210; that span reads RLS. Residue Glu-221 participates in Mg(2+) binding.

This sequence belongs to the UPP synthase family. Homodimer. Requires Mg(2+) as cofactor.

Its function is as follows. Catalyzes the condensation of isopentenyl diphosphate (IPP) with allylic pyrophosphates generating different type of terpenoids. In Geobacillus kaustophilus (strain HTA426), this protein is Isoprenyl transferase.